The following is a 437-amino-acid chain: Homogentisate 1,2-dioxygenase (437 aa).

His-295 acts as the Proton acceptor in catalysis. The Fe cation site is built by His-338 and Glu-344. Homogentisate contacts are provided by Tyr-353 and His-374. His-374 serves as a coordination point for Fe cation.

Belongs to the homogentisate dioxygenase family. As to quaternary structure, hexamer; dimer of trimers. Requires Fe cation as cofactor.

It carries out the reaction homogentisate + O2 = 4-maleylacetoacetate + H(+). Its pathway is amino-acid degradation; L-phenylalanine degradation; acetoacetate and fumarate from L-phenylalanine: step 4/6. In terms of biological role, involved in the catabolism of homogentisate (2,5-dihydroxyphenylacetate or 2,5-OH-PhAc), a central intermediate in the degradation of phenylalanine and tyrosine. Catalyzes the oxidative ring cleavage of the aromatic ring of homogentisate to yield maleylacetoacetate. This chain is Homogentisate 1,2-dioxygenase, found in Myxococcus xanthus (strain DK1622).